The primary structure comprises 160 residues: Large ribosomal subunit protein uL22c (160 aa).

It belongs to the universal ribosomal protein uL22 family. Part of the 50S ribosomal subunit.

It is found in the plastid. It localises to the chloroplast. Its function is as follows. This protein binds specifically to 23S rRNA. In terms of biological role, the globular domain of the protein is located near the polypeptide exit tunnel on the outside of the subunit, while an extended beta-hairpin is found that lines the wall of the exit tunnel in the center of the 70S ribosome. This Eucalyptus globulus subsp. globulus (Tasmanian blue gum) protein is Large ribosomal subunit protein uL22c (rpl22).